A 430-amino-acid polypeptide reads, in one-letter code: Serine hydroxymethyltransferase (430 aa).

(6S)-5,6,7,8-tetrahydrofolate-binding positions include Leu123 and 127–129 (GHL). Residue Lys232 is modified to N6-(pyridoxal phosphate)lysine. Glu248 provides a ligand contact to (6S)-5,6,7,8-tetrahydrofolate.

This sequence belongs to the SHMT family. Homodimer. The cofactor is pyridoxal 5'-phosphate.

Its subcellular location is the cytoplasm. It carries out the reaction (6R)-5,10-methylene-5,6,7,8-tetrahydrofolate + glycine + H2O = (6S)-5,6,7,8-tetrahydrofolate + L-serine. The protein operates within one-carbon metabolism; tetrahydrofolate interconversion. It functions in the pathway amino-acid biosynthesis; glycine biosynthesis; glycine from L-serine: step 1/1. In terms of biological role, catalyzes the reversible interconversion of serine and glycine with tetrahydrofolate (THF) serving as the one-carbon carrier. This reaction serves as the major source of one-carbon groups required for the biosynthesis of purines, thymidylate, methionine, and other important biomolecules. Also exhibits THF-independent aldolase activity toward beta-hydroxyamino acids, producing glycine and aldehydes, via a retro-aldol mechanism. The protein is Serine hydroxymethyltransferase of Anaplasma marginale (strain Florida).